A 184-amino-acid chain; its full sequence is MKLIVGLGNPGEKYAKTKHNVGYWVLDLLAEKLALSFDQKTENGIYVKQPDFILAKPTTFMNKSGDFVEELIKFYKINTQDLMIIYDDMNFEVGQAAIKTTGSAGGQRGMAHIIEKCKTKEIKRLKIGISRGENAKEYVLSPFLPKDNAKIKLVIEEAANILIFYLSNSFITTIEKFNANKNKV.

Y14 is a tRNA binding site. H19 acts as the Proton acceptor in catalysis. The tRNA site is built by F60 and N62.

This sequence belongs to the PTH family. Monomer.

It is found in the cytoplasm. The catalysed reaction is an N-acyl-L-alpha-aminoacyl-tRNA + H2O = an N-acyl-L-amino acid + a tRNA + H(+). In terms of biological role, hydrolyzes ribosome-free peptidyl-tRNAs (with 1 or more amino acids incorporated), which drop off the ribosome during protein synthesis, or as a result of ribosome stalling. Its function is as follows. Catalyzes the release of premature peptidyl moieties from peptidyl-tRNA molecules trapped in stalled 50S ribosomal subunits, and thus maintains levels of free tRNAs and 50S ribosomes. In Mesomycoplasma hyopneumoniae (strain 232) (Mycoplasma hyopneumoniae), this protein is Peptidyl-tRNA hydrolase.